The primary structure comprises 340 residues: Glycerol-3-phosphate dehydrogenase [NAD(P)+] (340 aa).

NADPH-binding residues include S13, Y14, and K108. Sn-glycerol 3-phosphate contacts are provided by K108, G137, and T139. An NADPH-binding site is contributed by A141. Sn-glycerol 3-phosphate contacts are provided by K193, D246, S256, R257, and N258. The active-site Proton acceptor is K193. R257 contributes to the NADPH binding site. I281 and E283 together coordinate NADPH.

The protein belongs to the NAD-dependent glycerol-3-phosphate dehydrogenase family.

The protein localises to the cytoplasm. The enzyme catalyses sn-glycerol 3-phosphate + NAD(+) = dihydroxyacetone phosphate + NADH + H(+). The catalysed reaction is sn-glycerol 3-phosphate + NADP(+) = dihydroxyacetone phosphate + NADPH + H(+). It functions in the pathway membrane lipid metabolism; glycerophospholipid metabolism. In terms of biological role, catalyzes the reduction of the glycolytic intermediate dihydroxyacetone phosphate (DHAP) to sn-glycerol 3-phosphate (G3P), the key precursor for phospholipid synthesis. This chain is Glycerol-3-phosphate dehydrogenase [NAD(P)+], found in Bartonella henselae (strain ATCC 49882 / DSM 28221 / CCUG 30454 / Houston 1) (Rochalimaea henselae).